The sequence spans 211 residues: Probable cytokinin riboside 5'-monophosphate phosphoribohydrolase LOGL3 (211 aa).

Residues glutamate 84, 102–103 (RK), 119–125 (GYGTLEE), and threonine 131 each bind substrate.

This sequence belongs to the LOG family. As to expression, expressed in roots, leaves, stems, tiller buds, shoot apex, immature inflorescences and flowers.

The enzyme catalyses N(6)-(dimethylallyl)adenosine 5'-phosphate + H2O = N(6)-dimethylallyladenine + D-ribose 5-phosphate. It carries out the reaction 9-ribosyl-trans-zeatin 5'-phosphate + H2O = trans-zeatin + D-ribose 5-phosphate. In terms of biological role, cytokinin-activating enzyme working in the direct activation pathway. Phosphoribohydrolase that converts inactive cytokinin nucleotides to the biologically active free-base forms. The protein is Probable cytokinin riboside 5'-monophosphate phosphoribohydrolase LOGL3 (LOGL3) of Oryza sativa subsp. japonica (Rice).